We begin with the raw amino-acid sequence, 208 residues long: MEKMTVSSNYTIALWATFTAISFAVGYQLGTSNASSTKKSSATLLRSKEMKEGKLHNDTDEEESESEDESDEDEDIESTSLNDIPGEVRMALVIRQDLGMTKGKIAAQCCHAALSCFRHIATNPARASYNPIMTQRWLNAGQAKITLKCPDKFTMDELYAKAISLGVNAAVIHDAGRTQIAAGSATVLGLGPAPKAVLDQITGDLKLY.

Residues 32 to 45 (SNASSTKKSSATLL) show a composition bias toward low complexity. A disordered region spans residues 32–81 (SNASSTKKSSATLLRSKEMKEGKLHNDTDEEESESEDESDEDEDIESTSL). A compositionally biased stretch (basic and acidic residues) spans 46–58 (RSKEMKEGKLHND). The span at 59–77 (TDEEESESEDESDEDEDIE) shows a compositional bias: acidic residues. A Glycyl lysine isopeptide (Lys-Gly) (interchain with G-Cter in ubiquitin) cross-link involves residue Lys152.

Belongs to the PTH2 family.

Its subcellular location is the cytoplasm. The catalysed reaction is an N-acyl-L-alpha-aminoacyl-tRNA + H2O = an N-acyl-L-amino acid + a tRNA + H(+). Functionally, the natural substrate for this enzyme may be peptidyl-tRNAs which drop off the ribosome during protein synthesis. The polypeptide is Peptidyl-tRNA hydrolase 2 (Saccharomyces cerevisiae (strain ATCC 204508 / S288c) (Baker's yeast)).